Reading from the N-terminus, the 181-residue chain is Transcription termination/antitermination protein NusG (181 aa).

One can recognise a KOW domain in the interval 130–161 (PGEMIRVNDGPFADFNGVVEEVDYEKSRLKVS).

Belongs to the NusG family. Monomer. Interacts with the transcription termination factor Rho and with RNA polymerase.

Functionally, participates in transcription elongation, termination and antitermination. In the absence of Rho, increases the rate of transcription elongation by the RNA polymerase (RNAP), probably by partially suppressing pausing. In the presence of Rho, modulates most Rho-dependent termination events by interacting with the RNAP to render the complex more susceptible to the termination activity of Rho. May be required to overcome a kinetic limitation of Rho to function at certain terminators. Also involved in ribosomal RNA transcriptional antitermination. The protein is Transcription termination/antitermination protein NusG of Buchnera aphidicola subsp. Acyrthosiphon pisum (strain APS) (Acyrthosiphon pisum symbiotic bacterium).